We begin with the raw amino-acid sequence, 368 residues long: MSGGACIAVRSLSRSWTDNAIRLIEADARRSADTHLLRYPLPAAWCTDVDVELYLKDETTHITGSLKHRLARSLFLYALCNGWINENTTVVEASSGSTAVSEAYFAALLGLPFIAVMPAATSASKIALIESQGGRCHFVQNSSQVYAEAERVAKETGGHYLDQFTNAERATDWRGNNNIAESIYVQMREEKHPTPEWIVVGAGTGGTSATIGRYIRYRRHATRLCVVDPENSAFFPAYSEGRYDIVMPTSSRIEGIGRPRVEPSFLPGVVDRMVAVPDAASIAAARHVSAVLGRRVGPSTGTNLWGAFGLLAEMVKQGRSGSVVTLLADSGDRYADTYFSDEWVSAQGLDPAGPAAALVEFERSCRWT.

At lysine 67 the chain carries N6-(pyridoxal phosphate)lysine. Pyridoxal 5'-phosphate is bound by residues 203–207 (GTGGT) and serine 299.

It belongs to the cysteine synthase/cystathionine beta-synthase family. Cds1 subfamily. Pyridoxal 5'-phosphate is required as a cofactor.

It localises to the cytoplasm. The enzyme catalyses L-cysteine + H2O = hydrogen sulfide + pyruvate + NH4(+) + H(+). Functionally, a cysteine desulfhydrase that generates hydrogen sulfide, H(2)S. The H(2)S produced by this enzyme stimulates respiration in M.tuberculosis, mediated primarily via cytochrome bd with a lesser contribution from cytochrome bc1/aa3. H(2)S modulates the balance between respiration and glycolysis, and also contributes to redox homeostasis. Probably eliminates toxic levels of Cys (which can induce oxidative stress). The chain is L-cysteine desulfhydrase Cds1 from Mycobacterium tuberculosis (strain ATCC 25177 / H37Ra).